The sequence spans 816 residues: Leucine--tRNA ligase (816 aa).

Residues 42 to 52 (PYPSGSLHMGH) carry the 'HIGH' region motif. Residues 574–578 (KMSKS) carry the 'KMSKS' region motif. Position 577 (Lys577) interacts with ATP.

This sequence belongs to the class-I aminoacyl-tRNA synthetase family.

It is found in the cytoplasm. The catalysed reaction is tRNA(Leu) + L-leucine + ATP = L-leucyl-tRNA(Leu) + AMP + diphosphate. This Ruthia magnifica subsp. Calyptogena magnifica protein is Leucine--tRNA ligase.